Reading from the N-terminus, the 168-residue chain is ATP synthase subunit b (168 aa).

The chain crosses the membrane as a helical span at residues 9 to 29 (AIPFGTIAYTLFIFLILLVML).

It belongs to the ATPase B chain family. As to quaternary structure, F-type ATPases have 2 components, F(1) - the catalytic core - and F(0) - the membrane proton channel. F(1) has five subunits: alpha(3), beta(3), gamma(1), delta(1), epsilon(1). F(0) has three main subunits: a(1), b(2) and c(10-14). The alpha and beta chains form an alternating ring which encloses part of the gamma chain. F(1) is attached to F(0) by a central stalk formed by the gamma and epsilon chains, while a peripheral stalk is formed by the delta and b chains.

It localises to the cell membrane. Its function is as follows. F(1)F(0) ATP synthase produces ATP from ADP in the presence of a proton or sodium gradient. F-type ATPases consist of two structural domains, F(1) containing the extramembraneous catalytic core and F(0) containing the membrane proton channel, linked together by a central stalk and a peripheral stalk. During catalysis, ATP synthesis in the catalytic domain of F(1) is coupled via a rotary mechanism of the central stalk subunits to proton translocation. Component of the F(0) channel, it forms part of the peripheral stalk, linking F(1) to F(0). In Bacillus cereus (strain G9842), this protein is ATP synthase subunit b.